The sequence spans 781 residues: Phenylalanine--tRNA ligase beta subunit (781 aa).

The region spanning 39 to 147 (APPFNDVVVA…DDAPVGEDLR (109 aa)) is the tRNA-binding domain. The region spanning 398–473 (PRREPIELRL…RLFGYDRIPA (76 aa)) is the B5 domain. Mg(2+) contacts are provided by aspartate 451, aspartate 457, glutamate 460, and glutamate 461. The FDX-ACB domain maps to 687 to 780 (SRFPQVRRDL…AARRCSATLR (94 aa)).

This sequence belongs to the phenylalanyl-tRNA synthetase beta subunit family. Type 1 subfamily. Tetramer of two alpha and two beta subunits. The cofactor is Mg(2+).

The protein localises to the cytoplasm. It carries out the reaction tRNA(Phe) + L-phenylalanine + ATP = L-phenylalanyl-tRNA(Phe) + AMP + diphosphate + H(+). The protein is Phenylalanine--tRNA ligase beta subunit of Thiobacillus denitrificans (strain ATCC 25259 / T1).